Here is a 282-residue protein sequence, read N- to C-terminus: uncharacterized protein (282 aa).

The next 4 helical transmembrane spans lie at 130–150 (WALL…GFGL), 170–190 (STSW…WPSA), 191–211 (AAGL…YVIV), and 223–243 (ILTH…WRSA). Positions 263–282 (DNASRGRRRGHLWPTDGSAA) are disordered.

It localises to the cell membrane. This is an uncharacterized protein from Mycobacterium tuberculosis (strain CDC 1551 / Oshkosh).